We begin with the raw amino-acid sequence, 587 residues long: ATP-dependent lipid A-core flippase (587 aa).

5 helical membrane-spanning segments follow: residues 31–51 (LIVS…LIYL), 68–88 (LKMM…TNFI), 145–165 (GSLI…AVMF), 166–186 (YTSW…AVLI), and 259–279 (VQVI…TPLI). The 284-residue stretch at 32 to 315 (IVSGVALVFN…LTAVNAQFQS (284 aa)) folds into the ABC transmembrane type-1 domain. Positions 347 to 583 (LEFKNVSFAY…NGAYKQLHSM (237 aa)) constitute an ABC transporter domain. 381-388 (GRSGSGKS) provides a ligand contact to ATP.

It belongs to the ABC transporter superfamily. Lipid exporter (TC 3.A.1.106) family. As to quaternary structure, homodimer.

The protein resides in the cell inner membrane. The catalysed reaction is ATP + H2O + lipid A-core oligosaccharideSide 1 = ADP + phosphate + lipid A-core oligosaccharideSide 2.. Its function is as follows. Involved in lipopolysaccharide (LPS) biosynthesis. Translocates lipid A-core from the inner to the outer leaflet of the inner membrane. Transmembrane domains (TMD) form a pore in the inner membrane and the ATP-binding domain (NBD) is responsible for energy generation. The protein is ATP-dependent lipid A-core flippase of Haemophilus influenzae (strain ATCC 51907 / DSM 11121 / KW20 / Rd).